The primary structure comprises 205 residues: Large ribosomal subunit protein uL3 (205 aa).

A disordered region spans residues 126-150 (GGPKTHGQSDRHRAPGSIGSTTTPG).

The protein belongs to the universal ribosomal protein uL3 family. In terms of assembly, part of the 50S ribosomal subunit. Forms a cluster with proteins L14 and L19.

Functionally, one of the primary rRNA binding proteins, it binds directly near the 3'-end of the 23S rRNA, where it nucleates assembly of the 50S subunit. This chain is Large ribosomal subunit protein uL3, found in Dehalococcoides mccartyi (strain ATCC BAA-2100 / JCM 16839 / KCTC 5957 / BAV1).